A 126-amino-acid polypeptide reads, in one-letter code: Large ribosomal subunit protein bL12 (126 aa).

This sequence belongs to the bacterial ribosomal protein bL12 family. In terms of assembly, homodimer. Part of the ribosomal stalk of the 50S ribosomal subunit. Forms a multimeric L10(L12)X complex, where L10 forms an elongated spine to which 2 to 4 L12 dimers bind in a sequential fashion. Binds GTP-bound translation factors.

Functionally, forms part of the ribosomal stalk which helps the ribosome interact with GTP-bound translation factors. Is thus essential for accurate translation. The chain is Large ribosomal subunit protein bL12 from Desulforudis audaxviator (strain MP104C).